The chain runs to 132 residues: MARVTVEDCIDKVDNRFELVLLAGHRARQISQGAQITVSRDNDKNPVVALREIADETLSPADLKEDLIHSLQKHVEVDEPEAVTEFISHSSETESVLDTSREEENCSFDYMSEEDLLAGIEGLVVPEKSDDY.

It belongs to the RNA polymerase subunit omega family. The RNAP catalytic core consists of 2 alpha, 1 beta, 1 beta' and 1 omega subunit. When a sigma factor is associated with the core the holoenzyme is formed, which can initiate transcription.

The enzyme catalyses RNA(n) + a ribonucleoside 5'-triphosphate = RNA(n+1) + diphosphate. Its function is as follows. Promotes RNA polymerase assembly. Latches the N- and C-terminal regions of the beta' subunit thereby facilitating its interaction with the beta and alpha subunits. This Bartonella bacilliformis (strain ATCC 35685 / KC583 / Herrer 020/F12,63) protein is DNA-directed RNA polymerase subunit omega.